Reading from the N-terminus, the 176-residue chain is Scytalone dehydratase-like protein AacuK (176 aa).

Substrate contacts are provided by tyrosine 26 and tyrosine 46. Catalysis depends on residues histidine 81 and histidine 107.

It belongs to the scytalone dehydratase family.

The protein operates within secondary metabolite biosynthesis. Its function is as follows. Scytalone dehydratase-like protein; part of the gene cluster that mediates the biosynthesis of the tetrahydroxanthone dimer secalonic acid D. The pathway begins with the synthesis of atrochrysone thioester by the polyketide synthase AacuL. The atrochrysone carboxyl ACP thioesterase AacuM then breaks the thioester bond and releases the atrochrysone carboxylic acid from AacuL. Atrochrysone carboxylic acid is decarboxylated by the decarboxylase AacuI, and oxidized by the anthrone oxygenase AacuG to yield emodin. Emodin is then reduced to emodin hydroquinone by a yet unidentified oxidoreductase. A-ring reduction by the short chain dehydrogenase AacuN, dehydration by the scytalone dehydratase-like protein AacuK and probable spontaneous re-oxidation, results in overall deoxygenation to chrysophanol. Baeyer-Villiger oxidation by the Baeyer-Villiger monooxygenase (BVMO) AacuH then yields monodictyphenone. Monodictyphenone is transformed into compounds with the tetrahydroxanthone skeleton via methylesterification by the methyltransferase AacuQ, followed by the action of the flavin-dependent monooxygenase AacuC, the isomerase AacuP, and the short chain dehydrogenase/reductase AacuF or AacuD. AacuF and AacuD should accept the same compound as a substrate but perform the ketoreduction with a different stereoselectivity, thus yielding blennolides B and A, respectively. In the final step of the biosynthesis, the cytochrome P450 monooxygenase AacuE accepts blennolide B and/or blennolide A to conduct the dimerization reaction to furnish the tetrahydroxanthone dimers, secalonic acids D, B, and F. This is Scytalone dehydratase-like protein AacuK from Aspergillus aculeatus (strain ATCC 16872 / CBS 172.66 / WB 5094).